A 63-amino-acid polypeptide reads, in one-letter code: Prokaryotic ubiquitin-like protein UBact (63 aa).

Residues 1-63 are disordered; sequence MSGRSTFGRF…SRRYRQRTGE (63 aa). The segment covering 17–50 has biased composition (basic and acidic residues); that stretch reads PWERKPGDDEGGPKRPKVERPDTNDLLKRMRRVD. An Isoglutamyl lysine isopeptide (Glu-Lys) (interchain with K-? in acceptor proteins) cross-link involves residue Glu-63.

This sequence belongs to the ubiquitin-like protein UBact family.

Functionally, may function as a protein modifier covalently attached to lysine residues of substrate proteins. This may serve to target the modified proteins for degradation by proteasomes. The polypeptide is Prokaryotic ubiquitin-like protein UBact (Handelsmanbacteria sp. (strain RIFCSPLOWO2_12_FULL_64_10)).